Reading from the N-terminus, the 238-residue chain is tRNA1(Val) (adenine(37)-N6)-methyltransferase (238 aa).

It belongs to the methyltransferase superfamily. tRNA (adenine-N(6)-)-methyltransferase family.

It is found in the cytoplasm. It carries out the reaction adenosine(37) in tRNA1(Val) + S-adenosyl-L-methionine = N(6)-methyladenosine(37) in tRNA1(Val) + S-adenosyl-L-homocysteine + H(+). Its function is as follows. Specifically methylates the adenine in position 37 of tRNA(1)(Val) (anticodon cmo5UAC). The chain is tRNA1(Val) (adenine(37)-N6)-methyltransferase from Shewanella putrefaciens (strain CN-32 / ATCC BAA-453).